We begin with the raw amino-acid sequence, 717 residues long: PAN2-PAN3 deadenylation complex subunit PAN3 (717 aa).

The C3H1-type zinc-finger motif lies at 8–37 (WARDVPCRNVIIYGFCKKKTEGCPFKHDDD). The disordered stretch occupies residues 37–100 (DDIATPTSTP…HTGSKSQVPK (64 aa)). Residues 62 to 90 (PSKISVSSLPSLNSQPSSTAPTSAPNATA) are compositionally biased toward low complexity. Over residues 91–100 (HTGSKSQVPK) the composition is skewed to polar residues. Residues 323-585 (QLFPSGGNLP…ATIIEKYIGL (263 aa)) are pseudokinase domain. ATP contacts are provided by residues Arg378, 428 to 435 (DYYPNATS), and 482 to 483 (DK). Residues 586 to 624 (DVVFKVMEAQQTYSEYAENVLSRELENGRLFRLICKLNF) adopt a coiled-coil conformation. The knob domain stretch occupies residues 625 to 717 (IFGRVENRLD…VDKTFRAMTL (93 aa)).

This sequence belongs to the protein kinase superfamily. PAN3 family. In terms of assembly, homodimer. Forms a heterotrimer with a catalytic subunit PAN2 to form the poly(A)-nuclease (PAN) deadenylation complex. Interacts (via PAM-2 motif) with poly(A)-binding protein PAB1 (via PABC domain), conferring substrate specificity of the enzyme complex.

The protein localises to the cytoplasm. Its function is as follows. Regulatory subunit of the poly(A)-nuclease (PAN) deadenylation complex, one of two cytoplasmic mRNA deadenylases involved in mRNA turnover. PAN specifically shortens poly(A) tails of RNA and the activity is stimulated by poly(A)-binding protein PAB1. PAN deadenylation is followed by rapid degradation of the shortened mRNA tails by the CCR4-NOT complex. Deadenylated mRNAs are then degraded by two alternative mechanisms, namely exosome-mediated 3'-5' exonucleolytic degradation, or deadenylation-dependent mRNA decaping and subsequent 5'-3' exonucleolytic degradation by XRN1. May also be involved in post-transcriptional maturation of mRNA poly(A) tails. PAN3 acts as a positive regulator for PAN activity, recruiting the catalytic subunit PAN2 to mRNA via its interaction with RNA and with PAB1. The sequence is that of PAN2-PAN3 deadenylation complex subunit PAN3 from Candida glabrata (strain ATCC 2001 / BCRC 20586 / JCM 3761 / NBRC 0622 / NRRL Y-65 / CBS 138) (Yeast).